Reading from the N-terminus, the 168-residue chain is Glycine-rich RNA-binding protein 2 (168 aa).

The region spanning 8–86 (YRCFVGGLAW…RNITVNQAQS (79 aa)) is the RRM domain. The segment at 148–168 (GYGGGGGYGGNRGDSGGNWRN) is disordered.

In terms of biological role, possibly has a role in RNA transcription or processing during stress. The chain is Glycine-rich RNA-binding protein 2 (GRP2) from Sorghum bicolor (Sorghum).